The primary structure comprises 440 residues: Thymidine phosphorylase (440 aa).

It belongs to the thymidine/pyrimidine-nucleoside phosphorylase family. In terms of assembly, homodimer.

It carries out the reaction thymidine + phosphate = 2-deoxy-alpha-D-ribose 1-phosphate + thymine. The protein operates within pyrimidine metabolism; dTMP biosynthesis via salvage pathway; dTMP from thymine: step 1/2. In terms of biological role, the enzymes which catalyze the reversible phosphorolysis of pyrimidine nucleosides are involved in the degradation of these compounds and in their utilization as carbon and energy sources, or in the rescue of pyrimidine bases for nucleotide synthesis. The sequence is that of Thymidine phosphorylase from Rhizobium meliloti (strain 1021) (Ensifer meliloti).